Reading from the N-terminus, the 227-residue chain is Ribonuclease HII (227 aa).

One can recognise an RNase H type-2 domain in the interval 16-205; sequence SLLAGVDEVG…VKMALDAVGV (190 aa). A divalent metal cation contacts are provided by D22, E23, and D114.

It belongs to the RNase HII family. It depends on Mn(2+) as a cofactor. The cofactor is Mg(2+).

It localises to the cytoplasm. It carries out the reaction Endonucleolytic cleavage to 5'-phosphomonoester.. In terms of biological role, endonuclease that specifically degrades the RNA of RNA-DNA hybrids. The chain is Ribonuclease HII from Marinobacter nauticus (strain ATCC 700491 / DSM 11845 / VT8) (Marinobacter aquaeolei).